A 133-amino-acid polypeptide reads, in one-letter code: Rodlin protein RdlB (133 aa).

The first 28 residues, 1–28 (MIKKVVAYAAIAASVMGASAAAAPQAMA), serve as a signal peptide directing secretion. Amyloid-forming stretches follow at residues 45 to 57 (QYFGNSMTTGNMS) and 59 to 70 (QMALIQGSFNKP). The segment at 45-70 (QYFGNSMTTGNMSPQMALIQGSFNKP) is required for amyloid formation.

It belongs to the rodlin family.

The protein localises to the secreted. Its subcellular location is the cell wall. It localises to the spore wall. Its function is as follows. Forms part of the rodlet layer on the spore surface; despite their high similarity both RdlA and RdlB are required for rodlet formation. Plays a role in cell adhesion to polystyrene plates. Forms amyloid-like fibrils in vitro composed of stacked beta-sheets. In Streptomyces coelicolor (strain ATCC BAA-471 / A3(2) / M145), this protein is Rodlin protein RdlB.